The sequence spans 364 residues: tRNA 2-selenouridine synthase (364 aa).

A Rhodanese domain is found at 14–137; the sequence is LIADTPIIDV…LRQTAIQATI (124 aa). Residue cysteine 97 is the S-selanylcysteine intermediate of the active site.

This sequence belongs to the SelU family. Monomer.

The catalysed reaction is 5-methylaminomethyl-2-thiouridine(34) in tRNA + selenophosphate + (2E)-geranyl diphosphate + H2O + H(+) = 5-methylaminomethyl-2-selenouridine(34) in tRNA + (2E)-thiogeraniol + phosphate + diphosphate. It carries out the reaction 5-methylaminomethyl-2-thiouridine(34) in tRNA + (2E)-geranyl diphosphate = 5-methylaminomethyl-S-(2E)-geranyl-thiouridine(34) in tRNA + diphosphate. The enzyme catalyses 5-methylaminomethyl-S-(2E)-geranyl-thiouridine(34) in tRNA + selenophosphate + H(+) = 5-methylaminomethyl-2-(Se-phospho)selenouridine(34) in tRNA + (2E)-thiogeraniol. It catalyses the reaction 5-methylaminomethyl-2-(Se-phospho)selenouridine(34) in tRNA + H2O = 5-methylaminomethyl-2-selenouridine(34) in tRNA + phosphate. Involved in the post-transcriptional modification of the uridine at the wobble position (U34) of tRNA(Lys), tRNA(Glu) and tRNA(Gln). Catalyzes the conversion of 2-thiouridine (S2U-RNA) to 2-selenouridine (Se2U-RNA). Acts in a two-step process involving geranylation of 2-thiouridine (S2U) to S-geranyl-2-thiouridine (geS2U) and subsequent selenation of the latter derivative to 2-selenouridine (Se2U) in the tRNA chain. The chain is tRNA 2-selenouridine synthase from Escherichia coli O17:K52:H18 (strain UMN026 / ExPEC).